The following is a 160-amino-acid chain: 6,7-dimethyl-8-ribityllumazine synthase (160 aa).

5-amino-6-(D-ribitylamino)uracil contacts are provided by residues tryptophan 28, 59-61 (ALE), and 81-83 (CVI). 86-87 (ET) contributes to the (2S)-2-hydroxy-3-oxobutyl phosphate binding site. Histidine 89 functions as the Proton donor in the catalytic mechanism. Residue asparagine 114 coordinates 5-amino-6-(D-ribitylamino)uracil. Position 128 (arginine 128) interacts with (2S)-2-hydroxy-3-oxobutyl phosphate.

This sequence belongs to the DMRL synthase family.

It carries out the reaction (2S)-2-hydroxy-3-oxobutyl phosphate + 5-amino-6-(D-ribitylamino)uracil = 6,7-dimethyl-8-(1-D-ribityl)lumazine + phosphate + 2 H2O + H(+). The protein operates within cofactor biosynthesis; riboflavin biosynthesis; riboflavin from 2-hydroxy-3-oxobutyl phosphate and 5-amino-6-(D-ribitylamino)uracil: step 1/2. In terms of biological role, catalyzes the formation of 6,7-dimethyl-8-ribityllumazine by condensation of 5-amino-6-(D-ribitylamino)uracil with 3,4-dihydroxy-2-butanone 4-phosphate. This is the penultimate step in the biosynthesis of riboflavin. This is 6,7-dimethyl-8-ribityllumazine synthase from Corynebacterium jeikeium (strain K411).